Reading from the N-terminus, the 53-residue chain is UPF0391 membrane protein Ent638_0536 (53 aa).

The next 2 membrane-spanning stretches (helical) occupy residues 4–24 and 27–47; these read WGII…GGLA and AAWA…VSLF.

It belongs to the UPF0391 family.

The protein localises to the cell membrane. This is UPF0391 membrane protein Ent638_0536 from Enterobacter sp. (strain 638).